The primary structure comprises 184 residues: ATP synthase subunit delta (184 aa).

The protein belongs to the ATPase delta chain family. In terms of assembly, F-type ATPases have 2 components, F(1) - the catalytic core - and F(0) - the membrane proton channel. F(1) has five subunits: alpha(3), beta(3), gamma(1), delta(1), epsilon(1). CF(0) has four main subunits: a(1), b(1), b'(1) and c(10-14). The alpha and beta chains form an alternating ring which encloses part of the gamma chain. F(1) is attached to F(0) by a central stalk formed by the gamma and epsilon chains, while a peripheral stalk is formed by the delta, b and b' chains.

The protein resides in the cellular thylakoid membrane. Functionally, f(1)F(0) ATP synthase produces ATP from ADP in the presence of a proton or sodium gradient. F-type ATPases consist of two structural domains, F(1) containing the extramembraneous catalytic core and F(0) containing the membrane proton channel, linked together by a central stalk and a peripheral stalk. During catalysis, ATP synthesis in the catalytic domain of F(1) is coupled via a rotary mechanism of the central stalk subunits to proton translocation. Its function is as follows. This protein is part of the stalk that links CF(0) to CF(1). It either transmits conformational changes from CF(0) to CF(1) or is implicated in proton conduction. The polypeptide is ATP synthase subunit delta (Synechococcus sp. (strain PCC 6716)).